A 221-amino-acid polypeptide reads, in one-letter code: Large ribosomal subunit protein bL25 (221 aa).

Residues 174-221 (SVVTVVPPTDEPTEEEVEAMEGEAATEEPEVVGEEKEEDSEEENKDEE) form a disordered region. The segment covering 184-221 (EPTEEEVEAMEGEAATEEPEVVGEEKEEDSEEENKDEE) has biased composition (acidic residues).

This sequence belongs to the bacterial ribosomal protein bL25 family. CTC subfamily. Part of the 50S ribosomal subunit; part of the 5S rRNA/L5/L18/L25 subcomplex. Contacts the 5S rRNA. Binds to the 5S rRNA independently of L5 and L18.

In terms of biological role, this is one of the proteins that binds to the 5S RNA in the ribosome where it forms part of the central protuberance. In Staphylococcus haemolyticus (strain JCSC1435), this protein is Large ribosomal subunit protein bL25.